The following is a 264-amino-acid chain: Indole-3-glycerol phosphate synthase (264 aa).

The protein belongs to the TrpC family.

The enzyme catalyses 1-(2-carboxyphenylamino)-1-deoxy-D-ribulose 5-phosphate + H(+) = (1S,2R)-1-C-(indol-3-yl)glycerol 3-phosphate + CO2 + H2O. It functions in the pathway amino-acid biosynthesis; L-tryptophan biosynthesis; L-tryptophan from chorismate: step 4/5. This Azoarcus sp. (strain BH72) protein is Indole-3-glycerol phosphate synthase.